Here is a 338-residue protein sequence, read N- to C-terminus: Holliday junction branch migration complex subunit RuvB (338 aa).

Residues 1 to 179 (MTDLTTPIRT…FGIPVRLNFY (179 aa)) are large ATPase domain (RuvB-L). Leu-18, Arg-19, Gly-60, Lys-63, Thr-64, Thr-65, Arg-169, Tyr-179, and Arg-216 together coordinate ATP. Thr-64 is a binding site for Mg(2+). The segment at 180–250 (THAELEQVIG…AADAALNRLE (71 aa)) is small ATPAse domain (RuvB-S). Residues 253–338 (ALGLDAMDRR…AGSQDGLFDK (86 aa)) form a head domain (RuvB-H) region. The DNA site is built by Arg-289, Arg-308, and Arg-313.

This sequence belongs to the RuvB family. Homohexamer. Forms an RuvA(8)-RuvB(12)-Holliday junction (HJ) complex. HJ DNA is sandwiched between 2 RuvA tetramers; dsDNA enters through RuvA and exits via RuvB. An RuvB hexamer assembles on each DNA strand where it exits the tetramer. Each RuvB hexamer is contacted by two RuvA subunits (via domain III) on 2 adjacent RuvB subunits; this complex drives branch migration. In the full resolvosome a probable DNA-RuvA(4)-RuvB(12)-RuvC(2) complex forms which resolves the HJ.

The protein localises to the cytoplasm. The catalysed reaction is ATP + H2O = ADP + phosphate + H(+). Its function is as follows. The RuvA-RuvB-RuvC complex processes Holliday junction (HJ) DNA during genetic recombination and DNA repair, while the RuvA-RuvB complex plays an important role in the rescue of blocked DNA replication forks via replication fork reversal (RFR). RuvA specifically binds to HJ cruciform DNA, conferring on it an open structure. The RuvB hexamer acts as an ATP-dependent pump, pulling dsDNA into and through the RuvAB complex. RuvB forms 2 homohexamers on either side of HJ DNA bound by 1 or 2 RuvA tetramers; 4 subunits per hexamer contact DNA at a time. Coordinated motions by a converter formed by DNA-disengaged RuvB subunits stimulates ATP hydrolysis and nucleotide exchange. Immobilization of the converter enables RuvB to convert the ATP-contained energy into a lever motion, pulling 2 nucleotides of DNA out of the RuvA tetramer per ATP hydrolyzed, thus driving DNA branch migration. The RuvB motors rotate together with the DNA substrate, which together with the progressing nucleotide cycle form the mechanistic basis for DNA recombination by continuous HJ branch migration. Branch migration allows RuvC to scan DNA until it finds its consensus sequence, where it cleaves and resolves cruciform DNA. The sequence is that of Holliday junction branch migration complex subunit RuvB from Sphingopyxis alaskensis (strain DSM 13593 / LMG 18877 / RB2256) (Sphingomonas alaskensis).